The primary structure comprises 275 residues: Seminase (275 aa).

A signal peptide spans 1–19 (MKRLLFLFLLAGILINNHA). Asn23 carries N-linked (GlcNAc...) asparagine glycosylation. One can recognise a Peptidase S1 domain in the interval 44–268 (VIGGRVTTNA…VKPFIVKGIK (225 aa)). Cys70 and Cys86 form a disulfide bridge. Catalysis depends on charge relay system residues His85 and Asp131. Cystine bridges form between Cys194-Cys210 and Cys220-Cys244. Ser224 functions as the Charge relay system in the catalytic mechanism.

It belongs to the peptidase S1 family. In terms of processing, undergoes cleavage in the male during mating with a cleaved product detected in the ejaculatory duct and/or bulb of males by 8-10 minutes after the start of mating. Further cleavage occurs in the mated female. As to expression, produced in the male accessory glands and secreted into seminal fluid.

The protein localises to the secreted. Functionally, seminal fluid protease which is required for cleavage and probably also activation of the metalloprotease Semp1. Also required for a number of female post-mating responses independent of Semp1 including egg laying and sperm usage. In Drosophila melanogaster (Fruit fly), this protein is Seminase.